Here is a 78-residue protein sequence, read N- to C-terminus: Acyl carrier protein (78 aa).

A Carrier domain is found at M1–V76. S36 bears the O-(pantetheine 4'-phosphoryl)serine mark.

It belongs to the acyl carrier protein (ACP) family. In terms of processing, 4'-phosphopantetheine is transferred from CoA to a specific serine of apo-ACP by AcpS. This modification is essential for activity because fatty acids are bound in thioester linkage to the sulfhydryl of the prosthetic group.

Its subcellular location is the cytoplasm. It functions in the pathway lipid metabolism; fatty acid biosynthesis. Functionally, carrier of the growing fatty acid chain in fatty acid biosynthesis. This is Acyl carrier protein from Aquifex aeolicus (strain VF5).